We begin with the raw amino-acid sequence, 371 residues long: Peptide chain release factor 2 (371 aa).

An N5-methylglutamine modification is found at Q253.

This sequence belongs to the prokaryotic/mitochondrial release factor family. In terms of processing, methylated by PrmC. Methylation increases the termination efficiency of RF2.

It is found in the cytoplasm. Its function is as follows. Peptide chain release factor 2 directs the termination of translation in response to the peptide chain termination codons UGA and UAA. The protein is Peptide chain release factor 2 (prfB) of Mycobacterium bovis (strain ATCC BAA-935 / AF2122/97).